The primary structure comprises 278 residues: Orotidine 5'-phosphate decarboxylase (278 aa).

Residues Asp-40, 62-64 (KTH), 93-102 (DRKFADIGNT), Tyr-223, and Arg-242 each bind substrate. Residue Lys-95 is the Proton donor of the active site.

The protein belongs to the OMP decarboxylase family.

It catalyses the reaction orotidine 5'-phosphate + H(+) = UMP + CO2. It participates in pyrimidine metabolism; UMP biosynthesis via de novo pathway; UMP from orotate: step 2/2. This Schizophyllum commune (Split gill fungus) protein is Orotidine 5'-phosphate decarboxylase (URA1).